A 630-amino-acid chain; its full sequence is Adagio-like protein 3 (630 aa).

A PAS domain is found at E54–E126. The residue at position 102 (C102) is an S-4a-FMN cysteine. One can recognise an F-box domain in the interval Y220 to C268. Kelch repeat units follow at residues S380–D430, S432–G483, T485–H537, G545–G597, and T599–D629.

Belongs to the ADAGIO family. FMN binds covalently to cysteine after exposure to blue light and is reversed in the dark.

The protein resides in the nucleus. It functions in the pathway protein modification; protein ubiquitination. Its function is as follows. Component of an E3 ubiquitin ligase complex that plays a central role in blue light-dependent circadian cycles. Acts as a blue light photoreceptor, due to the presence of FMN, that mediates light-regulated protein degradation of critical clock components by targeting them to the proteasome complex. The SCF(ADO3) E3 ubiquitin ligase complex is involved in the regulation of circadian clock-dependent processes including transition to flowering time, hypocotyl elongation, cotyledons and leaf movement rhythms. The sequence is that of Adagio-like protein 3 from Oryza sativa subsp. japonica (Rice).